Consider the following 544-residue polypeptide: uncharacterized protein (544 aa).

The N-terminal stretch at 1–22 is a signal peptide; sequence MYFSQNAIILVMLMFVISAVFY.

This is an uncharacterized protein from Methanocaldococcus jannaschii (strain ATCC 43067 / DSM 2661 / JAL-1 / JCM 10045 / NBRC 100440) (Methanococcus jannaschii).